Consider the following 135-residue polypeptide: Galectin-1 (135 aa).

Alanine 2 is modified (N-acetylalanine). The 132-residue stretch at 4–135 (GLVASNLNLK…DFKIKCVAFE (132 aa)) folds into the Galectin domain. An N6-acetyllysine mark is found at lysine 13 and lysine 29. Serine 30 carries the phosphoserine modification. A beta-D-galactoside is bound by residues 45-49 (HFNPR), histidine 53, asparagine 62, and 69-72 (WGAE). Lysine 108 carries the N6-acetyllysine; alternate modification. Lysine 108 is subject to N6-succinyllysine; alternate. Lysine 128 is subject to N6-acetyllysine.

As to quaternary structure, homodimer. Binds LGALS3BP. Interacts with CD2, CD3, CD4, CD6, CD7, CD43, ALCAM and CD45. Interacts with laminin (via poly-N-acetyllactosamine). Interacts with SUSD2. Interacts with cargo receptor TMED10; the interaction mediates the translocation from the cytoplasm into the ERGIC (endoplasmic reticulum-Golgi intermediate compartment) and thereby secretion.

Its subcellular location is the secreted. The protein resides in the extracellular space. It localises to the extracellular matrix. The protein localises to the cytoplasm. Its function is as follows. Lectin that binds beta-galactoside and a wide array of complex carbohydrates. Plays a role in regulating apoptosis, cell proliferation and cell differentiation. Inhibits CD45 protein phosphatase activity and therefore the dephosphorylation of Lyn kinase. Strong inducer of T-cell apoptosis. Has hemagglutinating activity towards human erythrocytes. The protein is Galectin-1 of Capra hircus (Goat).